Reading from the N-terminus, the 508-residue chain is Zinc finger CCCH-type with G patch domain-containing protein (508 aa).

The disordered stretch occupies residues 67–86 (QQESSHHDSGTPETDTKTSV). A compositionally biased stretch (basic and acidic residues) spans 69 to 86 (ESSHHDSGTPETDTKTSV). Residues 161–188 (RSMVPCPYFLEGKCKFAGAECRFSHGYL) form a C3H1-type zinc finger. The segment at 253–282 (IYPLGPEEVESDSESDSQSDTGDSSSSKAA) is disordered. Positions 259–269 (EEVESDSESDS) are enriched in acidic residues. Residues 270–279 (QSDTGDSSSS) are compositionally biased toward low complexity. Positions 310–356 (TKGIGSKLMAKMGYIFGKGLGKDGEGRVEPIEVVVLPQGKSLDKCAE) constitute a G-patch domain. The disordered stretch occupies residues 404–426 (SLHDLRVSHPGAKPDIRKTRKSA).

It localises to the nucleus. Functionally, transcription repressor. The chain is Zinc finger CCCH-type with G patch domain-containing protein from Nematostella vectensis (Starlet sea anemone).